A 90-amino-acid chain; its full sequence is DNA-directed RNA polymerase subunit omega (90 aa).

Belongs to the RNA polymerase subunit omega family. In terms of assembly, the RNAP catalytic core consists of 2 alpha, 1 beta, 1 beta' and 1 omega subunit. When a sigma factor is associated with the core the holoenzyme is formed, which can initiate transcription.

It catalyses the reaction RNA(n) + a ribonucleoside 5'-triphosphate = RNA(n+1) + diphosphate. In terms of biological role, promotes RNA polymerase assembly. Latches the N- and C-terminal regions of the beta' subunit thereby facilitating its interaction with the beta and alpha subunits. The chain is DNA-directed RNA polymerase subunit omega from Streptomyces griseus subsp. griseus (strain JCM 4626 / CBS 651.72 / NBRC 13350 / KCC S-0626 / ISP 5235).